The sequence spans 190 residues: MRNYNNFNRVWKAPRRPFEKERLDREMKLCGQYGLRCKREIWRVNMTLSKMRRTARLLLTLPENHPRRLLEGSAIMRRCHGYGFLDEDKDKLDYVLSLTVPDILERRLQTVVFKHGLAKSVHHSRVLIQQRHIAVAKQIVTIPSFIVRVSSEHHIAFADASPFGNGRPGRVKRVKRNAAKKGSGGGDDDE.

Positions 106-178 constitute an S4 RNA-binding domain; sequence RRLQTVVFKH…GRVKRVKRNA (73 aa). The disordered stretch occupies residues 166-190; it reads GRPGRVKRVKRNAAKKGSGGGDDDE. Residues 169 to 179 show a composition bias toward basic residues; that stretch reads GRVKRVKRNAA.

Belongs to the universal ribosomal protein uS4 family.

The chain is Small ribosomal subunit protein uS4 from Trypanosoma brucei brucei.